Reading from the N-terminus, the 106-residue chain is MENIGIDVKKPERTCNDPKCPFHGNLRIHGQIIVGTVVSTKMNGSIVLKRESRRLIKKYERYETKISKFHAHLPGCIDVRPGDRVKIAECRKLAKTISFVVVEKVN.

This sequence belongs to the universal ribosomal protein uS17 family. In terms of assembly, part of the 30S ribosomal subunit.

Functionally, one of the primary rRNA binding proteins, it binds specifically to the 5'-end of 16S ribosomal RNA. The polypeptide is Small ribosomal subunit protein uS17 (Picrophilus torridus (strain ATCC 700027 / DSM 9790 / JCM 10055 / NBRC 100828 / KAW 2/3)).